Reading from the N-terminus, the 156-residue chain is Endogenous retrovirus group K member 6 Pro protein (156 aa).

A Peptidase A2 domain is found at 21 to 96 (FEGLVDTGAD…IPLNLWGRDL (76 aa)). The active site involves D26. The G-patch domain maps to 111–156 (YSPTSQKIMTKMGYIPGKGLGKNEDGIKIPVEAKINQEREGIGNPC).

This sequence belongs to the peptidase A2 family. HERV class-II K(HML-2) subfamily. In terms of assembly, active as a homodimer. In terms of processing, autoproteolytically processed at the N-terminus. Expected C-terminal autoprocessing not detected. The sequence shown is that of the processed Pro protein.

It carries out the reaction Processing at the authentic HIV-1 PR recognition site and release of the mature p17 matrix and the p24 capsid protein, as a result of the cleavage of the -SQNY-|-PIVQ- cleavage site.. Its function is as follows. Retroviral proteases have roles in the processing of the primary translation products and the maturation of the viral particle. Endogenous Pro proteins may have kept, lost or modified their original function during evolution. The sequence is that of Endogenous retrovirus group K member 6 Pro protein (ERVK-6) from Homo sapiens (Human).